Here is a 242-residue protein sequence, read N- to C-terminus: 1-(5-phosphoribosyl)-5-[(5-phosphoribosylamino)methylideneamino] imidazole-4-carboxamide isomerase (242 aa).

Asp10 functions as the Proton acceptor in the catalytic mechanism. Asp131 acts as the Proton donor in catalysis.

The protein belongs to the HisA/HisF family.

Its subcellular location is the cytoplasm. It catalyses the reaction 1-(5-phospho-beta-D-ribosyl)-5-[(5-phospho-beta-D-ribosylamino)methylideneamino]imidazole-4-carboxamide = 5-[(5-phospho-1-deoxy-D-ribulos-1-ylimino)methylamino]-1-(5-phospho-beta-D-ribosyl)imidazole-4-carboxamide. It participates in amino-acid biosynthesis; L-histidine biosynthesis; L-histidine from 5-phospho-alpha-D-ribose 1-diphosphate: step 4/9. The polypeptide is 1-(5-phosphoribosyl)-5-[(5-phosphoribosylamino)methylideneamino] imidazole-4-carboxamide isomerase (Granulibacter bethesdensis (strain ATCC BAA-1260 / CGDNIH1)).